We begin with the raw amino-acid sequence, 109 residues long: Phosphoribosyl-ATP pyrophosphatase (109 aa).

Belongs to the PRA-PH family.

It localises to the cytoplasm. It carries out the reaction 1-(5-phospho-beta-D-ribosyl)-ATP + H2O = 1-(5-phospho-beta-D-ribosyl)-5'-AMP + diphosphate + H(+). Its pathway is amino-acid biosynthesis; L-histidine biosynthesis; L-histidine from 5-phospho-alpha-D-ribose 1-diphosphate: step 2/9. This chain is Phosphoribosyl-ATP pyrophosphatase, found in Marinobacter nauticus (strain ATCC 700491 / DSM 11845 / VT8) (Marinobacter aquaeolei).